The sequence spans 253 residues: Small ribosomal subunit protein uS2 (253 aa).

This sequence belongs to the universal ribosomal protein uS2 family.

The sequence is that of Small ribosomal subunit protein uS2 from Chlorobium luteolum (strain DSM 273 / BCRC 81028 / 2530) (Pelodictyon luteolum).